The following is a 118-amino-acid chain: Small ribosomal subunit protein uS13 (118 aa).

Residues 91-118 form a disordered region; the sequence is HRRGLPVRGQRTRTNARTRKGPRRPIKK.

The protein belongs to the universal ribosomal protein uS13 family. Part of the 30S ribosomal subunit. Forms a loose heterodimer with protein S19. Forms two bridges to the 50S subunit in the 70S ribosome.

Located at the top of the head of the 30S subunit, it contacts several helices of the 16S rRNA. In the 70S ribosome it contacts the 23S rRNA (bridge B1a) and protein L5 of the 50S subunit (bridge B1b), connecting the 2 subunits; these bridges are implicated in subunit movement. Contacts the tRNAs in the A and P-sites. The protein is Small ribosomal subunit protein uS13 of Methylococcus capsulatus (strain ATCC 33009 / NCIMB 11132 / Bath).